A 546-amino-acid polypeptide reads, in one-letter code: Alpha-isocomene synthase (546 aa).

Mg(2+) contacts are provided by Asp-299, Asp-303, Asp-443, and Glu-451. Positions 299–303 (DDTYD) match the DDXXD motif motif.

Belongs to the terpene synthase family. Tpsa subfamily. It depends on Mg(2+) as a cofactor. The cofactor is Mn(2+). As to expression, highly expressed in roots, lower levels in stems and leaves and detected in disk florets, but not in ray florets.

It catalyses the reaction (2E,6E)-farnesyl diphosphate = (-)-alpha-isocomene + diphosphate. It functions in the pathway secondary metabolite biosynthesis; terpenoid biosynthesis. Sesquiterpene synthase involved in the biosynthesis of alpha-isocomene as the major product and detectable amounts of beta-caryophyllene, beta-isocomene, silphinene and modeph-2-ene. Produces exclusively the (-)-(E)-beta caryophyllene enantiomer. The sequence is that of Alpha-isocomene synthase from Matricaria chamomilla var. recutita (German chamomile).